The sequence spans 376 residues: Heat-inducible transcription repressor HrcA (376 aa).

The protein belongs to the HrcA family.

In terms of biological role, negative regulator of class I heat shock genes (grpE-dnaK-dnaJ and groELS operons). Prevents heat-shock induction of these operons. This Chloroflexus aggregans (strain MD-66 / DSM 9485) protein is Heat-inducible transcription repressor HrcA.